Here is a 181-residue protein sequence, read N- to C-terminus: Resolvase/recombinase (181 aa).

Residues 2-137 (RLFGYARVST…EGRLEAKAKG (136 aa)) enclose the Resolvase/invertase-type recombinase catalytic domain. Catalysis depends on Ser10, which acts as the O-(5'-phospho-DNA)-serine intermediate. The H-T-H motif DNA-binding region spans 161–180 (AMEIAKRLKIGRSTVYKVLA).

Belongs to the site-specific recombinase resolvase family.

Functionally, site-specific recombination protein. In Pseudomonas putida (Arthrobacter siderocapsulatus), this protein is Resolvase/recombinase.